We begin with the raw amino-acid sequence, 705 residues long: Polyphosphate kinase (705 aa).

Residue Asn58 participates in ATP binding. The Mg(2+) site is built by Arg389 and Arg419. The active-site Phosphohistidine intermediate is the His449. Tyr482, Arg578, and His606 together coordinate ATP.

Belongs to the polyphosphate kinase 1 (PPK1) family. Requires Mg(2+) as cofactor. In terms of processing, an intermediate of this reaction is the autophosphorylated ppk in which a phosphate is covalently linked to a histidine residue through a N-P bond.

It catalyses the reaction [phosphate](n) + ATP = [phosphate](n+1) + ADP. Functionally, catalyzes the reversible transfer of the terminal phosphate of ATP to form a long-chain polyphosphate (polyP). In Halalkalibacterium halodurans (strain ATCC BAA-125 / DSM 18197 / FERM 7344 / JCM 9153 / C-125) (Bacillus halodurans), this protein is Polyphosphate kinase.